The following is a 144-amino-acid chain: D-aminoacyl-tRNA deacylase (144 aa).

A Gly-cisPro motif, important for rejection of L-amino acids motif is present at residues 136 to 137 (GP).

The protein belongs to the DTD family. In terms of assembly, homodimer.

The protein localises to the cytoplasm. The enzyme catalyses glycyl-tRNA(Ala) + H2O = tRNA(Ala) + glycine + H(+). It catalyses the reaction a D-aminoacyl-tRNA + H2O = a tRNA + a D-alpha-amino acid + H(+). An aminoacyl-tRNA editing enzyme that deacylates mischarged D-aminoacyl-tRNAs. Also deacylates mischarged glycyl-tRNA(Ala), protecting cells against glycine mischarging by AlaRS. Acts via tRNA-based rather than protein-based catalysis; rejects L-amino acids rather than detecting D-amino acids in the active site. By recycling D-aminoacyl-tRNA to D-amino acids and free tRNA molecules, this enzyme counteracts the toxicity associated with the formation of D-aminoacyl-tRNA entities in vivo and helps enforce protein L-homochirality. This Haemophilus influenzae (strain PittEE) protein is D-aminoacyl-tRNA deacylase.